Here is a 106-residue protein sequence, read N- to C-terminus: Small ribosomal subunit protein uS10 (106 aa).

It belongs to the universal ribosomal protein uS10 family. In terms of assembly, part of the 30S ribosomal subunit.

In terms of biological role, involved in the binding of tRNA to the ribosomes. This Wolbachia sp. subsp. Drosophila simulans (strain wRi) protein is Small ribosomal subunit protein uS10.